The primary structure comprises 108 residues: DNA-binding protein HBbu (108 aa).

This sequence belongs to the bacterial histone-like protein family.

In terms of biological role, histone-like DNA-binding protein which is capable of wrapping DNA to stabilize it, and thus to prevent its denaturation under extreme environmental conditions. This is DNA-binding protein HBbu (hbb) from Borreliella afzelii (Borrelia afzelii).